The following is a 260-amino-acid chain: Alpha- and beta-fibrinogenase OhS1 (260 aa).

The N-terminal stretch at 1-18 (MALIRVLASLLILQLSYA) is a signal peptide. Positions 19-24 (VTPFDR) are excised as a propeptide. The Peptidase S1 domain maps to 25–248 (IIGGFECNEY…YIDWIEGIIA (224 aa)). 6 disulfides stabilise this stretch: Cys31-Cys163, Cys50-Cys66, Cys98-Cys255, Cys142-Cys209, Cys174-Cys188, and Cys199-Cys224. A glycan (N-linked (GlcNAc...) asparagine) is linked at Asn44. The active-site Charge relay system is His65. Asn79 is a glycosylation site (N-linked (GlcNAc...) asparagine). Residue Asp110 is the Charge relay system of the active site. Residues Asn117 and Asn121 are each glycosylated (N-linked (GlcNAc...) asparagine). Ser203 (charge relay system) is an active-site residue. Asn250 carries N-linked (GlcNAc...) asparagine glycosylation.

This sequence belongs to the peptidase S1 family. Snake venom subfamily. Monomer. Expressed by the venom gland.

The protein resides in the secreted. Completely inhibited by NPGB, PMSF, diisopropylfluorophosphate (DFP), benzamidine and soybean trypsin inhibitor. Not inhibited by EDTA. Functionally, snake venom serine protease that possesses potent fibrinogenolytic (on both alpha- (FGA) and beta-chains (FGB)) and amidolytic activities. Selectively cleaves Arg-|-Xaa or Lys-|-Xaa bonds. In Ophiophagus hannah (King cobra), this protein is Alpha- and beta-fibrinogenase OhS1.